Here is a 123-residue protein sequence, read N- to C-terminus: Small ribosomal subunit protein eS8 (123 aa).

The disordered stretch occupies residues 1 to 38; it reads MKDQGRSPRKRTGGRRRPNHKKKKHELGKDTVETQVGE. Over residues 7-26 the composition is skewed to basic residues; the sequence is SPRKRTGGRRRPNHKKKKHE.

As to quaternary structure, part of the 30S ribosomal subunit.

The sequence is that of Small ribosomal subunit protein eS8 (rps8e) from Haloarcula marismortui (strain ATCC 43049 / DSM 3752 / JCM 8966 / VKM B-1809) (Halobacterium marismortui).